The following is a 111-amino-acid chain: Colipase (111 aa).

Residues 1–16 form the signal peptide; the sequence is MKVLVLLLVTLAVVYA. Positions 17 to 21 are cleaved as a propeptide — enterostatin, activation peptide; the sequence is APDPR. 5 disulfide bridges follow: cysteine 33–cysteine 44, cysteine 39–cysteine 55, cysteine 43–cysteine 77, cysteine 65–cysteine 85, and cysteine 79–cysteine 103.

This sequence belongs to the colipase family. In terms of assembly, forms a 1:1 stoichiometric complex with pancreatic lipase. In terms of tissue distribution, expressed by the pancreas.

The protein localises to the secreted. In terms of biological role, colipase is a cofactor of pancreatic lipase. It allows the lipase to anchor itself to the lipid-water interface. Without colipase the enzyme is washed off by bile salts, which have an inhibitory effect on the lipase. Its function is as follows. Enterostatin has a biological activity as a satiety signal. In Ictidomys tridecemlineatus (Thirteen-lined ground squirrel), this protein is Colipase (CLPS).